Consider the following 144-residue polypeptide: MAKSIPSAGLRLRLRLRRNARRRSRKSTRKIPKGVIHVQASFHNTIVTVTDVRGRVISWSSAGTCGFKSTRKGTPFAAQTAAGDAIRPVVDQGMQRAEVRIKGPGLGRDAALRAIRRSGIRLSCIRDVTPLPHNGCRPPKKRRV.

This sequence belongs to the universal ribosomal protein uS11 family. Part of the 30S ribosomal subunit.

The protein resides in the plastid. Its subcellular location is the chloroplast. This chain is Small ribosomal subunit protein uS11c, found in Oenothera biennis (German evening primrose).